The following is a 214-amino-acid chain: Ribosomal RNA small subunit methyltransferase G (214 aa).

S-adenosyl-L-methionine-binding positions include G77, L82, 128–129, and R143; that span reads VE.

This sequence belongs to the methyltransferase superfamily. RNA methyltransferase RsmG family.

The protein localises to the cytoplasm. It catalyses the reaction guanosine(527) in 16S rRNA + S-adenosyl-L-methionine = N(7)-methylguanosine(527) in 16S rRNA + S-adenosyl-L-homocysteine. Its function is as follows. Specifically methylates the N7 position of guanine in position 527 of 16S rRNA. This chain is Ribosomal RNA small subunit methyltransferase G, found in Nitrosomonas eutropha (strain DSM 101675 / C91 / Nm57).